The primary structure comprises 452 residues: UDP-N-acetylmuramoylalanine--D-glutamate ligase (452 aa).

Residue 119–125 (GSNGKTT) coordinates ATP.

It belongs to the MurCDEF family.

The protein resides in the cytoplasm. It catalyses the reaction UDP-N-acetyl-alpha-D-muramoyl-L-alanine + D-glutamate + ATP = UDP-N-acetyl-alpha-D-muramoyl-L-alanyl-D-glutamate + ADP + phosphate + H(+). The protein operates within cell wall biogenesis; peptidoglycan biosynthesis. In terms of biological role, cell wall formation. Catalyzes the addition of glutamate to the nucleotide precursor UDP-N-acetylmuramoyl-L-alanine (UMA). The protein is UDP-N-acetylmuramoylalanine--D-glutamate ligase of Streptococcus equi subsp. zooepidemicus (strain MGCS10565).